Consider the following 206-residue polypeptide: Small ribosomal subunit protein uS4 (206 aa).

One can recognise an S4 RNA-binding domain in the interval 98–176 (RRLDNVVYRL…APKWLEANRE (79 aa)).

The protein belongs to the universal ribosomal protein uS4 family. In terms of assembly, part of the 30S ribosomal subunit. Contacts protein S5. The interaction surface between S4 and S5 is involved in control of translational fidelity.

Functionally, one of the primary rRNA binding proteins, it binds directly to 16S rRNA where it nucleates assembly of the body of the 30S subunit. Its function is as follows. With S5 and S12 plays an important role in translational accuracy. The chain is Small ribosomal subunit protein uS4 from Gloeobacter violaceus (strain ATCC 29082 / PCC 7421).